The primary structure comprises 1031 residues: Toll-like receptor 9 (1031 aa).

Residues 1–25 (MGPCHGALQPLSLLVQAAMLAVALA) form the signal peptide. At 26–817 (QGTLPPFLPC…LCLDESLSWD (792 aa)) the chain is on the extracellular side. Cysteines 35 and 45 form a disulfide. 47–51 (WLFLK) contacts DNA. LRR repeat units follow at residues 62–85 (RDNV…DFAQ), 87–110 (SNLQ…HFPC), 122–147 (VPTL…SLVS), 150–166 (LSRT…LTGL), 167–190 (HALR…ALEV), 198–221 (LGNL…LPPS), 223–242 (EYLL…DLAN), 243–268 (LTAL…CVEC), 283–306 (LSRL…WFRG), 308–332 (GNLT…AFQG), 333–356 (LAQL…HLTL), 363–386 (LLSL…TLQP), 390–413 (LPML…IFKD), 414–438 (FPGL…ATTG), 470–494 (CKNL…MFAQ), 496–519 (SRLQ…QFVP), 520–543 (LTSL…SFTE), 545–567 (PRLE…VGHN), 574–598 (LPTL…LCST), 600–622 (LWAL…LYLR), 627–650 (LRSL…TLGN), 652–675 (PKSL…SLTL), 676–699 (LPNL…SLPS), 701–723 (TQLQ…FFAL), 724–747 (ATRL…WFGF), and 749–772 (AGSL…AFVD). Residue N64 is glycosylated (N-linked (GlcNAc...) asparagine). Residues 72–77 (SNRIHH) and 95–109 (KWNC…MHFP) contribute to the DNA site. A disulfide bridge connects residues C98 and C110. The N-linked (GlcNAc...) asparagine glycan is linked to N129. Residues Y132, R152, and 179-181 (YYK) contribute to the DNA site. C178 and C184 are oxidised to a cystine. A glycan (N-linked (GlcNAc...) asparagine) is linked at N200. DNA is bound at residue Y208. N210 and N242 each carry an N-linked (GlcNAc...) asparagine glycan. 2 cysteine pairs are disulfide-bonded: C255/C268 and C258/C265. C258 carries the S-palmitoyl cysteine lipid modification. A DNA-binding site is contributed by R262. C265 is lipidated: S-palmitoyl cysteine. Residues N309 and N340 are each glycosylated (N-linked (GlcNAc...) asparagine). A disulfide bond links C470 and C500. Residues N472 and N513 are each glycosylated (N-linked (GlcNAc...) asparagine). Residue N567 is glycosylated (N-linked (GlcNAc...) asparagine). N669 and N694 each carry an N-linked (GlcNAc...) asparagine glycan. An N-linked (GlcNAc...) asparagine glycan is attached at N731. Disulfide bonds link C764–C790 and C766–C809. The helical transmembrane segment at 818-838 (CFGLSLLVVALGLAMPMLHHL) threads the bilayer. The Cytoplasmic portion of the chain corresponds to 839–1031 (CGWDLWYCFH…NFCRGPTMAE (193 aa)). Residues 866–1011 (LSYDAFVVFD…SFWAQLGMAL (146 aa)) form the TIR domain.

Belongs to the Toll-like receptor family. Monomer and homodimer. Exists as a monomer in the absence of unmethylated cytidine-phosphate-guanosine (CpG) ligand. Proteolytic processing of an insertion loop (Z-loop) is required for homodimerization upon binding to the unmethylated CpG ligand leading to its activation. Interacts with MYD88 via their respective TIR domains. Interacts with BTK. Interacts (via transmembrane domain) with UNC93B1. Interacts with CD300LH; the interaction may promote full activation of TLR9-triggered innate responses. Interacts with CNPY3 and HSP90B1; this interaction is required for proper folding in the endoplasmic reticulum. Interacts with SMPDL3B. Interacts with CD82; this interaction is essential for TLR9-dependent myddosome formation in response to CpG stimulation. In terms of processing, activated by proteolytic cleavage of the flexible loop between repeats LRR14 and LRR15 within the ectodomain. Cleavage requires UNC93B1. Proteolytically processed by first removing the majority of the ectodomain by either asparagine endopeptidase (AEP) or a cathepsin followed by a trimming event that is solely cathepsin mediated and required for optimal receptor signaling. Post-translationally, palmitoylated by ZDHHC3 in the Golgi regulates TLR9 trafficking from the Golgi to endosomes. Depalmitoylation by PPT1 controls the release of TLR9 from UNC93B1 in endosomes. In terms of tissue distribution, expressed in airway epithelium, vascular endothelium and inflammatory cells in blood vessels of the lungs (at protein level). Highly expressed in pulmonary intravascular macrophages (PIMs) and to a lesser extent in alveolar macrophages, neutrophiles, type-II alveolar epithelial cells and bronchial epithelial cells of the lungs (at protein level). High constitutive intracellular expression in leukocytes including polymorphonuclear leukocytes (PMNs), CD4 and CD8 T cells (at protein level). Expressed throughout the respiratory tract including larynx, upper, middle and lower trachea, and bronchus in isolated equine respiratory epithelial cells (ERECs) and in fully differentiated ERECs cultured at the air-fluid interface (AFI) (at protein level). Constitutively expressed in peripheral blood mononuclear cells (PBMCs), lymph nodes and spleen. The level of expression in PBMCs is about 2- to 3-fold higher than that in lymph nodes and spleen. Very low expression in liver, heart, lung, kidney, small intestine, colon and stomach. Low expression in the airway tissue epithelium of the larynx, upper trachea, middle tranchea, lower trachea, bronchus and spleen, and more abundant expression in mesenteric lymph node. Not expressed in fully differentiated bronchus epithelial cells cultured at the AFI for four weeks. Expressed in gingival tissue.

It localises to the endoplasmic reticulum membrane. Its subcellular location is the endosome. The protein localises to the lysosome. The protein resides in the cytoplasmic vesicle. It is found in the phagosome. It localises to the cell membrane. Its subcellular location is the cytoplasm. The protein localises to the nucleus. Its function is as follows. Key component of innate and adaptive immunity. TLRs (Toll-like receptors) control host immune response against pathogens through recognition of molecular patterns specific to microorganisms. TLR9 is a nucleotide-sensing TLR which is activated by unmethylated cytidine-phosphate-guanosine (CpG) dinucleotides. Acts via MYD88 and TRAF6, leading to NF-kappa-B activation, cytokine secretion and the inflammatory response. Upon CpG stimulation, induces B-cell proliferation, activation, survival and antibody production. In Equus caballus (Horse), this protein is Toll-like receptor 9.